Here is a 419-residue protein sequence, read N- to C-terminus: Histidine--tRNA ligase (419 aa).

This sequence belongs to the class-II aminoacyl-tRNA synthetase family.

The protein localises to the cytoplasm. It catalyses the reaction tRNA(His) + L-histidine + ATP = L-histidyl-tRNA(His) + AMP + diphosphate + H(+). The sequence is that of Histidine--tRNA ligase from Pyrobaculum aerophilum (strain ATCC 51768 / DSM 7523 / JCM 9630 / CIP 104966 / NBRC 100827 / IM2).